Reading from the N-terminus, the 100-residue chain is Small ribosomal subunit protein uS14c (100 aa).

Belongs to the universal ribosomal protein uS14 family. In terms of assembly, part of the 30S ribosomal subunit.

Its subcellular location is the plastid. It localises to the chloroplast. In terms of biological role, binds 16S rRNA, required for the assembly of 30S particles. This is Small ribosomal subunit protein uS14c from Citrus sinensis (Sweet orange).